A 504-amino-acid chain; its full sequence is Maturase K (504 aa).

The protein belongs to the intron maturase 2 family. MatK subfamily.

Its subcellular location is the plastid. It is found in the chloroplast. Usually encoded in the trnK tRNA gene intron. Probably assists in splicing its own and other chloroplast group II introns. In Lepidium virginicum (Virginia pepperweed), this protein is Maturase K.